We begin with the raw amino-acid sequence, 593 residues long: Arginine--tRNA ligase (593 aa).

Residues 138–148 carry the 'HIGH' region motif; it reads ANPTGPLHVGH.

Belongs to the class-I aminoacyl-tRNA synthetase family. As to quaternary structure, monomer.

Its subcellular location is the cytoplasm. It carries out the reaction tRNA(Arg) + L-arginine + ATP = L-arginyl-tRNA(Arg) + AMP + diphosphate. The polypeptide is Arginine--tRNA ligase (Burkholderia lata (strain ATCC 17760 / DSM 23089 / LMG 22485 / NCIMB 9086 / R18194 / 383)).